An 891-amino-acid polypeptide reads, in one-letter code: Translation initiation factor IF-2 (891 aa).

Positions N390–K559 constitute a tr-type G domain. The G1 stretch occupies residues G399–T406. GTP is bound at residue G399–T406. Residues G424–S428 are G2. Residues D445–G448 form a G3 region. Residues D445–H449 and N499–D502 contribute to the GTP site. The segment at N499–D502 is G4. A G5 region spans residues S535 to T537.

This sequence belongs to the TRAFAC class translation factor GTPase superfamily. Classic translation factor GTPase family. IF-2 subfamily.

Its subcellular location is the cytoplasm. Functionally, one of the essential components for the initiation of protein synthesis. Protects formylmethionyl-tRNA from spontaneous hydrolysis and promotes its binding to the 30S ribosomal subunits. Also involved in the hydrolysis of GTP during the formation of the 70S ribosomal complex. The protein is Translation initiation factor IF-2 of Blochmanniella pennsylvanica (strain BPEN).